Consider the following 348-residue polypeptide: Small ribosomal subunit biogenesis GTPase RsgA (348 aa).

A CP-type G domain is found at 72–230 (RNQLSRPAIA…IADTPGFNQP (159 aa)). GTP-binding positions include 121–124 (TKAD) and 172–180 (GPSGVGKSS). Zn(2+) is bound by residues Cys-255, Cys-260, His-262, and Cys-268. Basic and acidic residues predominate over residues 305–322 (AKSDRQGQQRLEPLLDAK). Positions 305-348 (AKSDRQGQQRLEPLLDAKKYRRRSRRQQHQHVNPMAEEVLDSEW) are disordered. Residues 323–333 (KYRRRSRRQQH) are compositionally biased toward basic residues.

It belongs to the TRAFAC class YlqF/YawG GTPase family. RsgA subfamily. Monomer. Associates with 30S ribosomal subunit, binds 16S rRNA. It depends on Zn(2+) as a cofactor.

Its subcellular location is the cytoplasm. Its function is as follows. One of several proteins that assist in the late maturation steps of the functional core of the 30S ribosomal subunit. Helps release RbfA from mature subunits. May play a role in the assembly of ribosomal proteins into the subunit. Circularly permuted GTPase that catalyzes slow GTP hydrolysis, GTPase activity is stimulated by the 30S ribosomal subunit. The sequence is that of Small ribosomal subunit biogenesis GTPase RsgA from Thermosynechococcus vestitus (strain NIES-2133 / IAM M-273 / BP-1).